Here is a 59-residue protein sequence, read N- to C-terminus: Large ribosomal subunit protein uL30 (59 aa).

It belongs to the universal ribosomal protein uL30 family. Part of the 50S ribosomal subunit.

This is Large ribosomal subunit protein uL30 from Ruminiclostridium cellulolyticum (strain ATCC 35319 / DSM 5812 / JCM 6584 / H10) (Clostridium cellulolyticum).